A 635-amino-acid polypeptide reads, in one-letter code: MVSIRLPDGSVRQYEHPVTVAEVAASIGPGLAKAALGGKLDGELVDTSALIDRDASLAIVTDKDADGLDIIRHSTAHLLAYAVKELHPDAQVTIGPVIDNGFYYDFSYHRPFTPEDLEAIEKRMQELAKRDEPVTRRVVSRDEAVSYFRSIGEKYKAEIIESIPASDEIKLYSHGSFTDLCRGPHVPSTGKLKVFKLMKVAGAYWRGDSKNEQLQRIYGTAWTRKEDQDAYLHMLEEAEKRDHRKLGKQLDLFHIQEEAPGMVFWHPKGWTLWQQVEQYMRRRLDAAGYLEIKTPMIMDRSLWEASGHWQNYRENMFTTESEKRDYAIKPMNCPGHVQVFKHGLRSYRDLPLRYAEFGSCHRNEASGALHGLMRVRGFVQDDAHIFCTEDQINSEAIAFNKLAMSVYEDFGFDRIDIKLSLRPEQRMGSDETWDHAEEGLRNALKACGLEWEELPGEGAFYGPKIEYHIKDALGRSWQCGTLQLDMMLPERLGAEYVAEDNSRRRPVMLHRAIVGSMERFLGILIEHHAGAMPVWLAPAHAVVLNIAESQAEYARTVAQSLQKQGLRVSADLRNEKISYKIREHTLEKVPYLLVVGDKEREAQTVAVRARGGVDLGVMPVEAFVERLREDIQAFK.

The TGS domain maps to 1-61 (MVSIRLPDGS…DRDASLAIVT (61 aa)). The catalytic stretch occupies residues 242–533 (DHRKLGKQLD…LIEHHAGAMP (292 aa)). Cysteine 333, histidine 384, and histidine 510 together coordinate Zn(2+).

The protein belongs to the class-II aminoacyl-tRNA synthetase family. As to quaternary structure, homodimer. The cofactor is Zn(2+).

The protein localises to the cytoplasm. The enzyme catalyses tRNA(Thr) + L-threonine + ATP = L-threonyl-tRNA(Thr) + AMP + diphosphate + H(+). Functionally, catalyzes the attachment of threonine to tRNA(Thr) in a two-step reaction: L-threonine is first activated by ATP to form Thr-AMP and then transferred to the acceptor end of tRNA(Thr). Also edits incorrectly charged L-seryl-tRNA(Thr). This chain is Threonine--tRNA ligase, found in Burkholderia pseudomallei (strain 1106a).